A 159-amino-acid polypeptide reads, in one-letter code: Phosphopantetheine adenylyltransferase (159 aa).

The protein belongs to the eukaryotic CoaD family.

The protein localises to the cytoplasm. The catalysed reaction is (R)-4'-phosphopantetheine + ATP + H(+) = 3'-dephospho-CoA + diphosphate. It functions in the pathway cofactor biosynthesis; coenzyme A biosynthesis. Functionally, reversibly transfers an adenylyl group from ATP to 4'-phosphopantetheine, yielding dephospho-CoA (dPCoA) and pyrophosphate. In Thermococcus gammatolerans (strain DSM 15229 / JCM 11827 / EJ3), this protein is Phosphopantetheine adenylyltransferase.